The following is a 482-amino-acid chain: Coagulation factor X (482 aa).

The N-terminal stretch at 1–20 (MESPVRLSLLYVVLASLLLP) is a signal peptide. The propeptide occupies 21–40 (GRSVFINRERANNVLQRIRR). One can recognise a Gla domain in the interval 41-85 (ANSFFEEIKKGNLERECVEEICSFEEAREVFEDNEKTTEFWNKYE). 4-carboxyglutamate occurs at positions 46, 47, 54, 56, 59, 60, 65, 66, 69, 72, 75, and 79. Cysteines 57 and 62 form a disulfide. The region spanning 86–122 (DGDQCESSPCQNQGECRDGLGSYTCTCTEGFEGKNCE) is the EGF-like 1; calcium-binding domain. Disulfide bonds link Cys90–Cys101, Cys95–Cys110, Cys112–Cys121, Cys129–Cys140, Cys136–Cys149, Cys151–Cys164, Cys172–Cys340, Cys238–Cys243, Cys259–Cys275, Cys388–Cys402, and Cys413–Cys441. A (3R)-3-hydroxyaspartate modification is found at Asp103. Residues 125-165 (VRKLCSLDNGDCDQFCREEQNSVVCSCAKGYFLGNDGKSCL) enclose the EGF-like 2 domain. Residues 184–231 (VALNTSNSEPDPEDLMPDADILYPTESPSELLNLNKTEPEANSDDVIR) constitute a propeptide, activation peptide. Asn187 and Asn218 each carry an N-linked (GlcNAc...) asparagine glycan. Residues 232–465 (IVGGQECKRG…FLKWIDRSMK (234 aa)) form the Peptidase S1 domain. Catalysis depends on charge relay system residues His274 and Asp320. The Charge relay system role is filled by Ser417.

The protein belongs to the peptidase S1 family. The two chains are formed from a single-chain precursor by the excision of two Arg residues and are held together by 1 or more disulfide bonds. Forms a heterodimer with SERPINA5. Interacts with ixolaris, an anticoagulant protein from Ixodes scapularis saliva. The vitamin K-dependent, enzymatic carboxylation of some glutamate residues allows the modified protein to bind calcium. In terms of processing, N- and O-glycosylated. Post-translationally, proteolytically cleaved and activated by cathepsin CTSG. The activation peptide is cleaved by factor IXa (in the intrinsic pathway), or by factor VIIa (in the extrinsic pathway). The iron and 2-oxoglutarate dependent 3-hydroxylation of aspartate and asparagine is (R) stereospecific within EGF domains. In terms of tissue distribution, plasma; synthesized in the liver.

Its subcellular location is the secreted. It catalyses the reaction Selective cleavage of Arg-|-Thr and then Arg-|-Ile bonds in prothrombin to form thrombin.. With respect to regulation, inhibited by SERPINA5. Functionally, factor Xa is a vitamin K-dependent glycoprotein that converts prothrombin to thrombin in the presence of factor Va, calcium and phospholipid during blood clotting. Factor Xa activates pro-inflammatory signaling pathways in a protease-activated receptor (PAR)-dependent manner. The chain is Coagulation factor X (F10) from Rattus norvegicus (Rat).